Here is a 3587-residue protein sequence, read N- to C-terminus: Tyrocidine synthase 2 (3587 aa).

Residues 466–1045 are domain 1 (Proline-activating); sequence AATMHELFSR…IQALAAYVEG (580 aa). Carrier domains follow at residues 972–1047 and 2007–2082; these read APTT…EGGE and APAT…EHSE. An O-(pantetheine 4'-phosphoryl)serine mark is found at Ser1007 and Ser2042. Residues 1522–2081 are domain 2 (Phenylalanine-activating); it reads EQTAVVFGDK…RDLARLIEHS (560 aa). Positions 2540 to 3122 are domain 3 (D-phenylalanine-activating); sequence YRADQTIQQL…NSRESEQGVV (583 aa). The tract at residues 3017-3040 is disordered; it reads NDKIDRKALPKPNQEENRTEQYAA. A compositionally biased stretch (basic and acidic residues) spans 3018–3035; it reads DKIDRKALPKPNQEENRT. Residues 3040 to 3114 enclose the Carrier 3 domain; sequence APQTELEQLL…EAALRVIPNS (75 aa). Ser3075 carries the post-translational modification O-(pantetheine 4'-phosphoryl)serine.

Belongs to the ATP-dependent AMP-binding enzyme family. Large multienzyme complex of TycA, TycB and TycC. It depends on pantetheine 4'-phosphate as a cofactor.

The catalysed reaction is L-phenylalanine + ATP + H2O = D-phenylalanine + AMP + diphosphate + H(+). The protein operates within antibiotic biosynthesis; tyrocidine biosynthesis. Functionally, activates the second to fourth amino acids in tyrocidine (in tyrocidine A, Pro, Phe, and D-Phe) and epimerizes the last one. This Brevibacillus parabrevis protein is Tyrocidine synthase 2 (tycB).